Here is a 750-residue protein sequence, read N- to C-terminus: Rho GTPase-activating protein 9 (750 aa).

The region spanning 22-88 (PRGSQLCALY…PAAYMIEESI (67 aa)) is the SH3 domain. Disordered stretches follow at residues 120-187 (ALPS…LMSE) and 242-319 (WKPP…LLDD). Over residues 163 to 180 (RSLSQEDLPSEASASTAG) the composition is skewed to polar residues. The WW domain maps to 213 to 247 (LQRLDAWEQHLDPNSGRCFYINSLTGCKSWKPPRR). 2 stretches are compositionally biased toward polar residues: residues 251–270 (ETNP…NDVL) and 291–300 (GSLSLSQRTS). Low complexity predominate over residues 301–317 (QLDPPALQAPRPLPQLL). The PH domain occupies 322–435 (EVEKSGLLNM…WHRALRTVIE (114 aa)). 3 lipid binding regions span residues 342-345 (RKNW), 397-399 (SSR), and 432-669 (TVIE…CLSQ). The span at 446–462 (EAPTGRDQGSGDRENPL) shows a compositional bias: basic and acidic residues. Residues 446-488 (EAPTGRDQGSGDRENPLELRLSGSGPAELSAGEDEEEESELVS) are disordered. The residue at position 475 (serine 475) is a Phosphoserine. Residues 476 to 485 (AGEDEEEESE) are compositionally biased toward acidic residues. Serine 500 is subject to Phosphoserine. The region spanning 542–749 (CQLESLCQRE…LMLTNFTSLF (208 aa)) is the Rho-GAP domain.

As to quaternary structure, interacts with FASLG. As to expression, predominantly expressed in peripheral blood leukocytes, spleen, and thymus.

GTPase activator for the Rho-type GTPases by converting them to an inactive GDP-bound state. Has a substantial GAP activity toward CDC42 and RAC1 and less toward RHOA. Has a role in regulating adhesion of hematopoietic cells to the extracellular matrix. Binds phosphoinositides, and has the highest affinity for phosphatidylinositol 3,4,5-trisphosphate, followed by phosphatidylinositol 3,4-bisphosphate and phosphatidylinositol 4,5-bisphosphate. This chain is Rho GTPase-activating protein 9 (ARHGAP9), found in Homo sapiens (Human).